A 578-amino-acid polypeptide reads, in one-letter code: Zinc finger protein with KRAB and SCAN domains 8 (578 aa).

Positions methionine 1 to glutamate 20 are disordered. A Phosphoserine modification is found at serine 12. Residue lysine 26 forms a Glycyl lysine isopeptide (Lys-Gly) (interchain with G-Cter in SUMO2) linkage. Positions arginine 51–isoleucine 133 constitute an SCAN box domain. The disordered stretch occupies residues alanine 158–glutamine 205. The span at asparagine 165–glutamine 205 shows a compositional bias: polar residues. Residues lysine 176 and lysine 199 each participate in a glycyl lysine isopeptide (Lys-Gly) (interchain with G-Cter in SUMO2) cross-link. Phosphoserine is present on serine 201. In terms of domain architecture, KRAB spans glutamate 220–proline 316. Residues lysine 221, lysine 272, and lysine 288 each participate in a glycyl lysine isopeptide (Lys-Gly) (interchain with G-Cter in SUMO2) cross-link. C2H2-type zinc fingers lie at residues histidine 322 to histidine 344 and tyrosine 350 to histidine 372. Glycyl lysine isopeptide (Lys-Gly) (interchain with G-Cter in SUMO2) cross-links involve residues lysine 374 and lysine 376. C2H2-type zinc fingers lie at residues tyrosine 378 to histidine 400, tyrosine 406 to histidine 428, tyrosine 434 to histidine 456, tyrosine 462 to histidine 484, tyrosine 490 to histidine 512, tyrosine 518 to histidine 540, and tyrosine 546 to histidine 568. Glycyl lysine isopeptide (Lys-Gly) (interchain with G-Cter in SUMO2) cross-links involve residues lysine 413 and lysine 441. Lysine 502 participates in a covalent cross-link: Glycyl lysine isopeptide (Lys-Gly) (interchain with G-Cter in SUMO2). A Glycyl lysine isopeptide (Lys-Gly) (interchain with G-Cter in SUMO2) cross-link involves residue lysine 572.

The protein belongs to the krueppel C2H2-type zinc-finger protein family.

It is found in the nucleus. Its function is as follows. May be involved in transcriptional regulation. The protein is Zinc finger protein with KRAB and SCAN domains 8 (ZKSCAN8) of Pan troglodytes (Chimpanzee).